The sequence spans 341 residues: Phenylalanine--tRNA ligase alpha subunit (341 aa).

Glutamate 254 provides a ligand contact to Mg(2+).

It belongs to the class-II aminoacyl-tRNA synthetase family. Phe-tRNA synthetase alpha subunit type 1 subfamily. Tetramer of two alpha and two beta subunits. Requires Mg(2+) as cofactor.

Its subcellular location is the cytoplasm. The enzyme catalyses tRNA(Phe) + L-phenylalanine + ATP = L-phenylalanyl-tRNA(Phe) + AMP + diphosphate + H(+). This is Phenylalanine--tRNA ligase alpha subunit from Chlorobium phaeovibrioides (strain DSM 265 / 1930) (Prosthecochloris vibrioformis (strain DSM 265)).